A 191-amino-acid chain; its full sequence is Protein GrpE (191 aa).

Belongs to the GrpE family. As to quaternary structure, homodimer.

The protein localises to the cytoplasm. Its function is as follows. Participates actively in the response to hyperosmotic and heat shock by preventing the aggregation of stress-denatured proteins, in association with DnaK and GrpE. It is the nucleotide exchange factor for DnaK and may function as a thermosensor. Unfolded proteins bind initially to DnaJ; upon interaction with the DnaJ-bound protein, DnaK hydrolyzes its bound ATP, resulting in the formation of a stable complex. GrpE releases ADP from DnaK; ATP binding to DnaK triggers the release of the substrate protein, thus completing the reaction cycle. Several rounds of ATP-dependent interactions between DnaJ, DnaK and GrpE are required for fully efficient folding. The sequence is that of Protein GrpE from Nitratidesulfovibrio vulgaris (strain ATCC 29579 / DSM 644 / CCUG 34227 / NCIMB 8303 / VKM B-1760 / Hildenborough) (Desulfovibrio vulgaris).